Here is a 92-residue protein sequence, read N- to C-terminus: Small ribosomal subunit protein uS19 (92 aa).

Belongs to the universal ribosomal protein uS19 family.

Protein S19 forms a complex with S13 that binds strongly to the 16S ribosomal RNA. The protein is Small ribosomal subunit protein uS19 of Rhizobium rhizogenes (strain K84 / ATCC BAA-868) (Agrobacterium radiobacter).